Consider the following 658-residue polypeptide: Threonine--tRNA ligase (658 aa).

The region spanning 1–64 is the TGS domain; the sequence is MSCSISLSFP…GQSGQVEIIT (64 aa). Residues 246–549 are catalytic; the sequence is DHRRLGREMD…LIENFAGHMP (304 aa). The Zn(2+) site is built by C343, H394, and H526.

The protein belongs to the class-II aminoacyl-tRNA synthetase family. In terms of assembly, homodimer. Requires Zn(2+) as cofactor.

Its subcellular location is the cytoplasm. The catalysed reaction is tRNA(Thr) + L-threonine + ATP = L-threonyl-tRNA(Thr) + AMP + diphosphate + H(+). Its function is as follows. Catalyzes the attachment of threonine to tRNA(Thr) in a two-step reaction: L-threonine is first activated by ATP to form Thr-AMP and then transferred to the acceptor end of tRNA(Thr). Also edits incorrectly charged L-seryl-tRNA(Thr). The protein is Threonine--tRNA ligase of Bartonella tribocorum (strain CIP 105476 / IBS 506).